Here is a 235-residue protein sequence, read N- to C-terminus: (5-formylfuran-3-yl)methyl phosphate synthase (235 aa).

K27 functions as the Schiff-base intermediate with substrate in the catalytic mechanism. The active-site Proton acceptor is the K86.

Belongs to the MfnB family.

The catalysed reaction is 2 D-glyceraldehyde 3-phosphate = 4-(hydroxymethyl)-2-furancarboxaldehyde phosphate + phosphate + 2 H2O. The protein operates within cofactor biosynthesis; methanofuran biosynthesis. Functionally, catalyzes the formation of 4-(hydroxymethyl)-2-furancarboxaldehyde phosphate (4-HFC-P) from two molecules of glyceraldehyde-3-P (GA-3-P). The protein is (5-formylfuran-3-yl)methyl phosphate synthase of Archaeoglobus fulgidus (strain ATCC 49558 / DSM 4304 / JCM 9628 / NBRC 100126 / VC-16).